A 568-amino-acid chain; its full sequence is Transport inhibitor response 1-like protein Os11g0515500 (568 aa).

In terms of domain architecture, F-box spans 1-45; it reads MVFFPEEVVEHILGFLASHRDRNAVSLVCREWYRVERLSRRSVLV. 1D-myo-inositol hexakisphosphate-binding positions include lysine 69, 103–104, and arginine 335; that span reads KR. An interaction with auxin-responsive proteins region spans residues 338–343; sequence PANANA. Residue 390 to 392 coordinates 1D-myo-inositol hexakisphosphate; sequence SFR. Residues 394–398 are interaction with auxin-responsive proteins; it reads CVLDP. Arginine 425 contacts 1D-myo-inositol hexakisphosphate. An interaction with auxin-responsive proteins region spans residues 453 to 454; that stretch reads AF. 1D-myo-inositol hexakisphosphate contacts are provided by residues 473 to 474 and arginine 498; that span reads KK.

Part of a SCF (SKP1-cullin-F-box) protein ligase complex. May interact with auxin and auxin-responsive proteins.

It localises to the nucleus. Its pathway is protein modification; protein ubiquitination. This chain is Transport inhibitor response 1-like protein Os11g0515500, found in Oryza sativa subsp. japonica (Rice).